The following is a 416-amino-acid chain: Iron-regulated transcriptional activator AFT2 (416 aa).

D53 is a Zn(2+) binding site. Positions 54, 55, 58, 74, 75, 76, 77, 78, and 81 each coordinate DNA. A Zn(2+)-binding site is contributed by H55. C86 contacts Zn(2+). S88 is a DNA binding site. C109 is a binding site for Zn(2+). Residues V119 and R120 each contribute to the DNA site. H133 and H135 together coordinate Zn(2+). DNA is bound by residues Q157 and N159. The CDC [2Fe-2S] cluster binding motif signature appears at 187 to 189 (CDC).

As to quaternary structure, homodimer. Dimerization decreases the DNA-binding activity.

The protein localises to the nucleus. Its activity is regulated as follows. Dimerization via the binding of Fe(2+) or a [2Fe-2S] cluster decreases the DNA-binding activity. Transcription factor required for iron homeostasis and resistance to oxidative stress. With AFT1, activates the gene expression in response to low-iron conditions, also called iron regulon. Recognizes the consensus iron-responsive element (Fe-RE) sequence 5'-CACCC-3' in the promoters of target genes. The transcription activation by AFT1 and AFT2 depends on the mitochondrial iron-sulfur protein biosynthesis pathway. In high iron condition, the presence of iron leads to dimerization, which in turn leads to a decrease in DNA affinity. The protein is Iron-regulated transcriptional activator AFT2 of Saccharomyces cerevisiae (strain ATCC 204508 / S288c) (Baker's yeast).